Consider the following 174-residue polypeptide: NADH-ubiquinone oxidoreductase chain 6 (174 aa).

4 helical membrane-spanning segments follow: residues 25–45, 48–68, 82–102, and 143–163; these read SMGLMLLIQTFLTCLITSIYV, FWFSYVLFLIFLGGMLILFIY, FSLTLISLIIFSIFTIVFFMI, and LITLLLINYLFLTLLVTVKIT.

It belongs to the complex I subunit 6 family.

The protein resides in the mitochondrion membrane. It carries out the reaction a ubiquinone + NADH + 5 H(+)(in) = a ubiquinol + NAD(+) + 4 H(+)(out). Functionally, core subunit of the mitochondrial membrane respiratory chain NADH dehydrogenase (Complex I) that is believed to belong to the minimal assembly required for catalysis. Complex I functions in the transfer of electrons from NADH to the respiratory chain. The immediate electron acceptor for the enzyme is believed to be ubiquinone. The polypeptide is NADH-ubiquinone oxidoreductase chain 6 (ND6) (Anopheles albimanus (New world malaria mosquito)).